The sequence spans 224 residues: Large ribosomal subunit protein bL25 (224 aa).

Residues T195 to E224 form a disordered region. Residues E197–A207 are compositionally biased toward acidic residues.

The protein belongs to the bacterial ribosomal protein bL25 family. CTC subfamily. In terms of assembly, part of the 50S ribosomal subunit; part of the 5S rRNA/L5/L18/L25 subcomplex. Contacts the 5S rRNA. Binds to the 5S rRNA independently of L5 and L18.

Its function is as follows. This is one of the proteins that binds to the 5S RNA in the ribosome where it forms part of the central protuberance. The protein is Large ribosomal subunit protein bL25 of Psychrobacter cryohalolentis (strain ATCC BAA-1226 / DSM 17306 / VKM B-2378 / K5).